The following is a 61-amino-acid chain: uncharacterized protein (61 aa).

This is an uncharacterized protein from Rickettsia conorii (strain ATCC VR-613 / Malish 7).